Here is a 109-residue protein sequence, read N- to C-terminus: Ribonuclease P protein component (109 aa).

This sequence belongs to the RnpA family. As to quaternary structure, consists of a catalytic RNA component (M1 or rnpB) and a protein subunit.

The enzyme catalyses Endonucleolytic cleavage of RNA, removing 5'-extranucleotides from tRNA precursor.. RNaseP catalyzes the removal of the 5'-leader sequence from pre-tRNA to produce the mature 5'-terminus. It can also cleave other RNA substrates such as 4.5S RNA. The protein component plays an auxiliary but essential role in vivo by binding to the 5'-leader sequence and broadening the substrate specificity of the ribozyme. This chain is Ribonuclease P protein component, found in Streptococcus agalactiae serotype III (strain NEM316).